The chain runs to 829 residues: DNA ligase (829 aa).

The interval 1–23 is disordered; that stretch reads MPAQTSRARPVEEMTAAQAREAH. Residues 47–51, 96–97, and Glu-130 each bind NAD(+); these read DAEYD and SL. Lys-132 functions as the N6-AMP-lysine intermediate in the catalytic mechanism. NAD(+)-binding residues include Arg-153, Glu-190, Lys-306, and Lys-330. Residues Cys-453, Cys-456, Cys-477, and Cys-483 each coordinate Zn(2+). In terms of domain architecture, BRCT spans 750–829; sequence AAAAVFSGQT…AEWLAMVEAA (80 aa).

The protein belongs to the NAD-dependent DNA ligase family. LigA subfamily. It depends on Mg(2+) as a cofactor. Mn(2+) serves as cofactor.

It carries out the reaction NAD(+) + (deoxyribonucleotide)n-3'-hydroxyl + 5'-phospho-(deoxyribonucleotide)m = (deoxyribonucleotide)n+m + AMP + beta-nicotinamide D-nucleotide.. DNA ligase that catalyzes the formation of phosphodiester linkages between 5'-phosphoryl and 3'-hydroxyl groups in double-stranded DNA using NAD as a coenzyme and as the energy source for the reaction. It is essential for DNA replication and repair of damaged DNA. This Methylobacterium nodulans (strain LMG 21967 / CNCM I-2342 / ORS 2060) protein is DNA ligase.